The primary structure comprises 459 residues: Ribulose bisphosphate carboxylase large chain (459 aa).

At Lys4 the chain carries N6,N6,N6-trimethyllysine. Residues Asn113 and Thr163 each coordinate substrate. Lys165 acts as the Proton acceptor in catalysis. Lys167 is a binding site for substrate. Mg(2+) contacts are provided by Lys191, Asp193, and Glu194. Lys191 is subject to N6-carboxylysine. The Proton acceptor role is filled by His284. Positions 285, 317, and 369 each coordinate substrate.

It belongs to the RuBisCO large chain family. Type I subfamily. Heterohexadecamer of 8 large chains and 8 small chains; disulfide-linked. The disulfide link is formed within the large subunit homodimers. Mg(2+) serves as cofactor. Post-translationally, the disulfide bond which can form in the large chain dimeric partners within the hexadecamer appears to be associated with oxidative stress and protein turnover.

It localises to the plastid. The protein localises to the chloroplast. It carries out the reaction 2 (2R)-3-phosphoglycerate + 2 H(+) = D-ribulose 1,5-bisphosphate + CO2 + H2O. It catalyses the reaction D-ribulose 1,5-bisphosphate + O2 = 2-phosphoglycolate + (2R)-3-phosphoglycerate + 2 H(+). Functionally, ruBisCO catalyzes two reactions: the carboxylation of D-ribulose 1,5-bisphosphate, the primary event in carbon dioxide fixation, as well as the oxidative fragmentation of the pentose substrate in the photorespiration process. Both reactions occur simultaneously and in competition at the same active site. This is Ribulose bisphosphate carboxylase large chain from Cephalotus follicularis (Albany pitcher plant).